The primary structure comprises 354 residues: Protein Wnt-11 (354 aa).

Positions 1–24 are cleaved as a signal peptide; it reads MKPSPQFLLAAFLSLILQTGICYG. N-linked (GlcNAc...) asparagine glycosylation is found at N40 and N90. Intrachain disulfides connect C80–C91, C130–C138, C140–C157, C209–C223, C211–C218, C283–C314, C299–C309, C313–C353, C329–C344, C331–C341, and C336–C337. The O-palmitoleoyl serine; by PORCN moiety is linked to residue S215. Residues N300 and N304 are each glycosylated (N-linked (GlcNAc...) asparagine).

Belongs to the Wnt family. In terms of processing, palmitoleoylation is required for efficient binding to frizzled receptors. Depalmitoleoylation leads to Wnt signaling pathway inhibition.

The protein localises to the secreted. It is found in the extracellular space. Its subcellular location is the extracellular matrix. Its function is as follows. Ligand for members of the frizzled family of seven transmembrane receptors. May play a role in the formation of dermal structure, both limb and feather buds. Is likely to signal over only few cell diameters. The protein is Protein Wnt-11 (WNT11) of Coturnix japonica (Japanese quail).